We begin with the raw amino-acid sequence, 278 residues long: NAD kinase (278 aa).

The active-site Proton acceptor is the D67. Residues D67–G68, R72, N137–E138, K148, R165, D167, T178–S183, and Q237 each bind NAD(+).

Belongs to the NAD kinase family. Requires a divalent metal cation as cofactor.

It is found in the cytoplasm. It carries out the reaction NAD(+) + ATP = ADP + NADP(+) + H(+). Its function is as follows. Involved in the regulation of the intracellular balance of NAD and NADP, and is a key enzyme in the biosynthesis of NADP. Catalyzes specifically the phosphorylation on 2'-hydroxyl of the adenosine moiety of NAD to yield NADP. This Thermococcus gammatolerans (strain DSM 15229 / JCM 11827 / EJ3) protein is NAD kinase.